The primary structure comprises 224 residues: Ribonuclease 3 (224 aa).

An RNase III domain is found at 4 to 127 (IEKLEQSLTY…IIGAIHLEAG (124 aa)). Position 40 (Glu-40) interacts with Mg(2+). Asp-44 is an active-site residue. Residues Asp-113 and Glu-116 each contribute to the Mg(2+) site. The active site involves Glu-116. Residues 154 to 223 (DYKTKLQEIT…AKIALEKLGA (70 aa)) enclose the DRBM domain.

The protein belongs to the ribonuclease III family. As to quaternary structure, homodimer. Mg(2+) is required as a cofactor.

It localises to the cytoplasm. The enzyme catalyses Endonucleolytic cleavage to 5'-phosphomonoester.. Functionally, digests double-stranded RNA. Involved in the processing of primary rRNA transcript to yield the immediate precursors to the large and small rRNAs (23S and 16S). Also processes some mRNAs, and tRNAs when they are encoded in the rRNA operon. In terms of biological role, CRISPR (clustered regularly interspaced short palindromic repeat) is an adaptive immune system that provides protection against mobile genetic elements (viruses, transposable elements and conjugative plasmids). CRISPR clusters contain spacers, sequences complementary to antecedent mobile elements, and target invading nucleic acids. CRISPR clusters are transcribed and processed into CRISPR RNA (crRNA). In this organism endogenous ribonuclease 3 and Cas9 are required for correct coprocessing of pre-crRNA and the trans-encoded small RNA (tracrRNA). Cas9, crRNA and tracrRNA are required for cleavage of invading DNA. Complements pre-crRNA and tracrRNA coprocessing defects in an rnc deletion in S.pyogenes strain 370. The polypeptide is Ribonuclease 3 (Campylobacter jejuni subsp. jejuni serotype O:2 (strain ATCC 700819 / NCTC 11168)).